The following is a 115-amino-acid chain: Large ribosomal subunit protein bL19 (115 aa).

It belongs to the bacterial ribosomal protein bL19 family.

Functionally, this protein is located at the 30S-50S ribosomal subunit interface and may play a role in the structure and function of the aminoacyl-tRNA binding site. This Aeromonas hydrophila subsp. hydrophila (strain ATCC 7966 / DSM 30187 / BCRC 13018 / CCUG 14551 / JCM 1027 / KCTC 2358 / NCIMB 9240 / NCTC 8049) protein is Large ribosomal subunit protein bL19.